Here is a 401-residue protein sequence, read N- to C-terminus: Adenylosuccinate synthetase (401 aa).

GTP contacts are provided by residues 11 to 17 (GDEGKGK) and 39 to 41 (GHT). Residue aspartate 12 is the Proton acceptor of the active site. Residues aspartate 12 and glycine 39 each coordinate Mg(2+). IMP-binding positions include 12 to 15 (DEGK), 37 to 40 (NAGH), threonine 127, arginine 141, glutamine 212, threonine 227, and arginine 290. Histidine 40 serves as the catalytic Proton donor. 286 to 292 (ATTGRPR) provides a ligand contact to substrate. GTP-binding positions include arginine 292, 318-320 (KGD), and 390-392 (SVG).

Belongs to the adenylosuccinate synthetase family. In terms of assembly, homodimer. The cofactor is Mg(2+).

The protein localises to the cytoplasm. The catalysed reaction is IMP + L-aspartate + GTP = N(6)-(1,2-dicarboxyethyl)-AMP + GDP + phosphate + 2 H(+). Its pathway is purine metabolism; AMP biosynthesis via de novo pathway; AMP from IMP: step 1/2. Functionally, plays an important role in the de novo pathway of purine nucleotide biosynthesis. Catalyzes the first committed step in the biosynthesis of AMP from IMP. This is Adenylosuccinate synthetase from Thermosipho africanus (strain TCF52B).